Here is a 313-residue protein sequence, read N- to C-terminus: Putative S-adenosyl-L-methionine-dependent methyltransferase MAV_4573 (313 aa).

S-adenosyl-L-methionine is bound by residues aspartate 129 and 158–159; that span reads DL.

This sequence belongs to the UPF0677 family.

In terms of biological role, exhibits S-adenosyl-L-methionine-dependent methyltransferase activity. The chain is Putative S-adenosyl-L-methionine-dependent methyltransferase MAV_4573 from Mycobacterium avium (strain 104).